The chain runs to 234 residues: Sugar fermentation stimulation protein homolog (234 aa).

It belongs to the SfsA family.

The protein is Sugar fermentation stimulation protein homolog of Shewanella sp. (strain MR-4).